The following is a 273-amino-acid chain: Large ribosomal subunit protein uL2cz/uL2cy (273 aa).

2 disordered regions span residues 1–23 and 223–273; these read MAIH…SQVK and NPVD…RRSK.

The protein belongs to the universal ribosomal protein uL2 family. In terms of assembly, part of the 50S ribosomal subunit.

It is found in the plastid. Its subcellular location is the chloroplast. The protein is Large ribosomal subunit protein uL2cz/uL2cy (rpl2-A) of Oenothera argillicola (Appalachian evening primrose).